Here is a 621-residue protein sequence, read N- to C-terminus: Putative 5'-3' exonuclease R528 (621 aa).

Belongs to the 5'-3' exonuclease family.

It is found in the virion. The sequence is that of Putative 5'-3' exonuclease R528 from Acanthamoeba polyphaga mimivirus (APMV).